The primary structure comprises 182 residues: UPF0398 protein lwe1908 (182 aa).

This sequence belongs to the UPF0398 family.

In Listeria welshimeri serovar 6b (strain ATCC 35897 / DSM 20650 / CCUG 15529 / CIP 8149 / NCTC 11857 / SLCC 5334 / V8), this protein is UPF0398 protein lwe1908.